The chain runs to 263 residues: L-aspartate dehydrogenase (263 aa).

NAD(+)-binding residues include A120 and N186. H216 is a catalytic residue.

It belongs to the L-aspartate dehydrogenase family.

The enzyme catalyses L-aspartate + NADP(+) + H2O = oxaloacetate + NH4(+) + NADPH + H(+). It carries out the reaction L-aspartate + NAD(+) + H2O = oxaloacetate + NH4(+) + NADH + H(+). It participates in cofactor biosynthesis; NAD(+) biosynthesis; iminoaspartate from L-aspartate (dehydrogenase route): step 1/1. Specifically catalyzes the NAD or NADP-dependent dehydrogenation of L-aspartate to iminoaspartate. This Acinetobacter baylyi (strain ATCC 33305 / BD413 / ADP1) protein is L-aspartate dehydrogenase.